Consider the following 136-residue polypeptide: Peptide methionine sulfoxide reductase MsrB (136 aa).

The region spanning 13 to 135 (ENDWRSKLTP…NSASLDFKDK (123 aa)) is the MsrB domain. 4 residues coordinate Zn(2+): cysteine 52, cysteine 55, cysteine 101, and cysteine 104. Cysteine 124 serves as the catalytic Nucleophile.

Belongs to the MsrB Met sulfoxide reductase family. The cofactor is Zn(2+).

The catalysed reaction is L-methionyl-[protein] + [thioredoxin]-disulfide + H2O = L-methionyl-(R)-S-oxide-[protein] + [thioredoxin]-dithiol. This Synechococcus sp. (strain RCC307) protein is Peptide methionine sulfoxide reductase MsrB.